The sequence spans 246 residues: Probable transcriptional regulatory protein CLJ_B3338 (246 aa).

Belongs to the TACO1 family.

It localises to the cytoplasm. The sequence is that of Probable transcriptional regulatory protein CLJ_B3338 from Clostridium botulinum (strain 657 / Type Ba4).